The sequence spans 164 residues: ATP synthase subunit b (164 aa).

The chain crosses the membrane as a helical span at residues 8–28 (IGLFFWQTIVFLILLFLMAKF).

This sequence belongs to the ATPase B chain family. F-type ATPases have 2 components, F(1) - the catalytic core - and F(0) - the membrane proton channel. F(1) has five subunits: alpha(3), beta(3), gamma(1), delta(1), epsilon(1). F(0) has three main subunits: a(1), b(2) and c(10-14). The alpha and beta chains form an alternating ring which encloses part of the gamma chain. F(1) is attached to F(0) by a central stalk formed by the gamma and epsilon chains, while a peripheral stalk is formed by the delta and b chains.

It localises to the cell membrane. Its function is as follows. F(1)F(0) ATP synthase produces ATP from ADP in the presence of a proton or sodium gradient. F-type ATPases consist of two structural domains, F(1) containing the extramembraneous catalytic core and F(0) containing the membrane proton channel, linked together by a central stalk and a peripheral stalk. During catalysis, ATP synthesis in the catalytic domain of F(1) is coupled via a rotary mechanism of the central stalk subunits to proton translocation. Functionally, component of the F(0) channel, it forms part of the peripheral stalk, linking F(1) to F(0). The protein is ATP synthase subunit b of Christiangramia forsetii (strain DSM 17595 / CGMCC 1.15422 / KT0803) (Gramella forsetii).